The chain runs to 286 residues: Phosphatidylserine decarboxylase proenzyme (286 aa).

Active-site charge relay system; for autoendoproteolytic cleavage activity residues include Asp-90, His-147, and Ser-250. Ser-250 serves as the catalytic Schiff-base intermediate with substrate; via pyruvic acid; for decarboxylase activity. Residue Ser-250 is modified to Pyruvic acid (Ser); by autocatalysis.

This sequence belongs to the phosphatidylserine decarboxylase family. PSD-B subfamily. Prokaryotic type I sub-subfamily. As to quaternary structure, heterodimer of a large membrane-associated beta subunit and a small pyruvoyl-containing alpha subunit. Pyruvate serves as cofactor. Post-translationally, is synthesized initially as an inactive proenzyme. Formation of the active enzyme involves a self-maturation process in which the active site pyruvoyl group is generated from an internal serine residue via an autocatalytic post-translational modification. Two non-identical subunits are generated from the proenzyme in this reaction, and the pyruvate is formed at the N-terminus of the alpha chain, which is derived from the carboxyl end of the proenzyme. The autoendoproteolytic cleavage occurs by a canonical serine protease mechanism, in which the side chain hydroxyl group of the serine supplies its oxygen atom to form the C-terminus of the beta chain, while the remainder of the serine residue undergoes an oxidative deamination to produce ammonia and the pyruvoyl prosthetic group on the alpha chain. During this reaction, the Ser that is part of the protease active site of the proenzyme becomes the pyruvoyl prosthetic group, which constitutes an essential element of the active site of the mature decarboxylase.

The protein localises to the cell membrane. It carries out the reaction a 1,2-diacyl-sn-glycero-3-phospho-L-serine + H(+) = a 1,2-diacyl-sn-glycero-3-phosphoethanolamine + CO2. It functions in the pathway phospholipid metabolism; phosphatidylethanolamine biosynthesis; phosphatidylethanolamine from CDP-diacylglycerol: step 2/2. Catalyzes the formation of phosphatidylethanolamine (PtdEtn) from phosphatidylserine (PtdSer). The protein is Phosphatidylserine decarboxylase proenzyme of Psychromonas ingrahamii (strain DSM 17664 / CCUG 51855 / 37).